Reading from the N-terminus, the 64-residue chain is Sperm protamine P1 (64 aa).

Residues 1 to 64 form a disordered region; that stretch reads MARYRHSRSR…SRRRRRRYYY (64 aa).

This sequence belongs to the protamine P1 family. As to expression, testis.

It localises to the nucleus. The protein resides in the chromosome. Protamines substitute for histones in the chromatin of sperm during the haploid phase of spermatogenesis. They compact sperm DNA into a highly condensed, stable and inactive complex. This Hypsiprymnodon moschatus (Musky rat kangaroo) protein is Sperm protamine P1 (PRM1).